Reading from the N-terminus, the 391-residue chain is MISHEDVVVVGALRTPIGRATRGKLRSLRNDELVTAAIRGIIEKTGIDPRLIEEVILGHCLSSMEGNVAARMGVLRAGVPVETPVMIINRLCGSGLESVGLIAEKIRSGRIEIGLAGGFESMTSYGLPKEYTLSRGGACEDAEDCMLTLGEVSEMLGKTHGVTRSEADEYAVTSQKRALEATKKGHFLAEIIPMRVGDETVERDEGIRETSLGTIESLKPVFRQDGVCTSANSSQLSDGASAVLLMKRRRADELGLPVVAEFIDFIAVGLKPRDMGLGPVVAIEKLLKRNGLEKDQISYFEINEAFASQVLCCLRKLQIGEDRVNRYGGSIALGHPIGASGARIVCTLLSVMKNEALEGYGVASLCVGAGHGVAALFRRAAGSKPQDIKNT.

The active-site Acyl-thioester intermediate is the Cys-92. Active-site proton acceptor residues include His-335 and Cys-366.

Belongs to the thiolase-like superfamily. Thiolase family. In terms of assembly, homodimer.

It is found in the peroxisome. It catalyses the reaction an acyl-CoA + acetyl-CoA = a 3-oxoacyl-CoA + CoA. It participates in lipid metabolism; fatty acid metabolism. This Encephalitozoon cuniculi (strain GB-M1) (Microsporidian parasite) protein is 3-ketoacyl-CoA thiolase, peroxisomal (FOX3).